The chain runs to 421 residues: uncharacterized protein (421 aa).

Coiled coils occupy residues Y126–I182 and Y328–L397.

This is an uncharacterized protein from Treponema pallidum (strain Nichols).